The following is a 946-amino-acid chain: Structure-specific endonuclease subunit SLX4 (946 aa).

Residues 1–14 are compositionally biased toward pro residues; the sequence is MPASPLPALSPPAS. Disordered regions lie at residues 1–35, 54–119, 147–318, 339–399, 416–471, 577–748, and 765–799; these read MPASPLPALSPPASPRRNTSGASALGSRKADIPPD, QHFD…EEAV, PSDE…GGFT, ADSA…AAQL, TKVP…PKHI, FPLL…GSGR, and ALSPTPPRIHNFENSQPLPLYSVSPTRAKKPKADS. A compositionally biased stretch (basic and acidic residues) spans 54 to 74; sequence QHFDDDIAGKDQEQSRKKSPE. 2 stretches are compositionally biased toward basic residues: residues 160-169 and 182-195; these read KAGKPRKPRA and KPKRTRVTKPKAAK. Basic and acidic residues predominate over residues 278–287; the sequence is AVSRRRDWTP. The segment covering 453 to 469 has biased composition (basic residues); the sequence is SKARSKKASTKAAAKPK. The segment covering 627–636 has biased composition (basic and acidic residues); sequence KANDEPDHVM. Positions 707–717 are enriched in polar residues; sequence KSQSAIATSGS. The span at 722–733 shows a compositional bias: basic and acidic residues; the sequence is KEPKRTKGKEVK.

This sequence belongs to the SLX4 family. Forms a heterodimer with SLX1. Post-translationally, phosphorylated in response to DNA damage.

It localises to the nucleus. In terms of biological role, regulatory subunit of the SLX1-SLX4 structure-specific endonuclease that resolves DNA secondary structures generated during DNA repair and recombination. Has endonuclease activity towards branched DNA substrates, introducing single-strand cuts in duplex DNA close to junctions with ss-DNA. This Phaeosphaeria nodorum (strain SN15 / ATCC MYA-4574 / FGSC 10173) (Glume blotch fungus) protein is Structure-specific endonuclease subunit SLX4.